The chain runs to 23 residues: Unknown protein NF005 from 2D-PAGE (23 aa).

The segment at 1–23 is disordered; the sequence is AGKARKQLSKNEDTKLKEQYIXD. Residues 9–23 are compositionally biased toward basic and acidic residues; the sequence is SKNEDTKLKEQYIXD.

The protein is Unknown protein NF005 from 2D-PAGE of Naegleria fowleri (Brain eating amoeba).